The following is a 401-amino-acid chain: Probable sodium/metabolite cotransporter BASS5, chloroplastic (401 aa).

Residues 1–46 (MAPNAAVLVRPHIAGVHHLPTGRRLPRLAPPQAVSPPFSRQKGSVV) constitute a chloroplast transit peptide. The next 9 helical transmembrane spans lie at 93-113 (TIIP…PPSF), 122-142 (APAL…KDFI), 159-179 (FIIK…IFNL), 185-205 (AGIM…ATFL), 215-235 (IVMT…LSYF), 247-267 (GMMS…LLLN), 273-293 (LCSA…ALCV), 299-319 (INIK…LFAF), and 372-392 (LVGV…FALV).

Belongs to the bile acid:sodium symporter (BASS) (TC 2.A.28) family.

The protein localises to the membrane. The protein resides in the plastid. It is found in the chloroplast envelope. Its function is as follows. May function as sodium-coupled metabolite transporter across the chloroplast envelope. This chain is Probable sodium/metabolite cotransporter BASS5, chloroplastic (BASS5), found in Oryza sativa subsp. indica (Rice).